The chain runs to 105 residues: Small ribosomal subunit protein uS10 (105 aa).

Belongs to the universal ribosomal protein uS10 family. Part of the 30S ribosomal subunit.

Involved in the binding of tRNA to the ribosomes. The protein is Small ribosomal subunit protein uS10 of Phytoplasma australiense.